The following is a 709-amino-acid chain: Probable lanosterol 14-alpha demethylase (709 aa).

Cysteine 425 is a binding site for heme.

Belongs to the cytochrome P450 family. Heme is required as a cofactor.

It localises to the membrane. It catalyses the reaction a 14alpha-methyl steroid + 3 reduced [NADPH--hemoprotein reductase] + 3 O2 = a Delta(14) steroid + formate + 3 oxidized [NADPH--hemoprotein reductase] + 4 H2O + 4 H(+). Its pathway is steroid biosynthesis; zymosterol biosynthesis; zymosterol from lanosterol: step 1/6. Functionally, catalyzes the 14-alpha demethylation of obtusifoliol to 4 alpha-methyl-5 alpha-ergosta-8,14,24(28)-trien-3 beta-ol. This Acanthamoeba polyphaga (Amoeba) protein is Probable lanosterol 14-alpha demethylase.